The primary structure comprises 319 residues: Histidinol-phosphate aminotransferase 1 (319 aa).

Residue Lys-182 is modified to N6-(pyridoxal phosphate)lysine.

Belongs to the class-II pyridoxal-phosphate-dependent aminotransferase family. Histidinol-phosphate aminotransferase subfamily. Requires pyridoxal 5'-phosphate as cofactor.

The catalysed reaction is L-histidinol phosphate + 2-oxoglutarate = 3-(imidazol-4-yl)-2-oxopropyl phosphate + L-glutamate. Its pathway is amino-acid biosynthesis; L-histidine biosynthesis; L-histidine from 5-phospho-alpha-D-ribose 1-diphosphate: step 7/9. This is Histidinol-phosphate aminotransferase 1 (hisC1) from Archaeoglobus fulgidus (strain ATCC 49558 / DSM 4304 / JCM 9628 / NBRC 100126 / VC-16).